A 116-amino-acid polypeptide reads, in one-letter code: MAYTITSQCISCKLCSSVCPTGAIKIAENGQHWIDSELCTNCVDTVYTVPQCKAGCPTCDGCVKVPSDYWEGWFANYNRVIAKLTKKQDYWERWFNCYSQKFSEQLQKHQGEILGV.

A 4Fe-4S ferredoxin-type domain is found at 2–29 (AYTITSQCISCKLCSSVCPTGAIKIAEN). Residues C9, C12, C15, and C19 each coordinate iron-sulfur cluster.

The sequence is that of Ferredoxin-like protein in nif region (fdxN) from Nostoc sp. (strain PCC 7120 / SAG 25.82 / UTEX 2576).